Consider the following 207-residue polypeptide: Glycerol-3-phosphate acyltransferase (207 aa).

A run of 5 helical transmembrane segments spans residues 4-24 (VVAT…SFAV), 58-78 (ILTL…AQLL), 86-106 (DMGI…PVFH), 120-140 (ILLA…LIIA), and 162-182 (VLLF…VLLI).

The protein belongs to the PlsY family. Probably interacts with PlsX.

The protein localises to the cell inner membrane. It catalyses the reaction an acyl phosphate + sn-glycerol 3-phosphate = a 1-acyl-sn-glycero-3-phosphate + phosphate. Its pathway is lipid metabolism; phospholipid metabolism. Catalyzes the transfer of an acyl group from acyl-phosphate (acyl-PO(4)) to glycerol-3-phosphate (G3P) to form lysophosphatidic acid (LPA). This enzyme utilizes acyl-phosphate as fatty acyl donor, but not acyl-CoA or acyl-ACP. The polypeptide is Glycerol-3-phosphate acyltransferase (Ralstonia nicotianae (strain ATCC BAA-1114 / GMI1000) (Ralstonia solanacearum)).